The following is a 350-amino-acid chain: MTDQPQQLTIRRPDDWHIHLRDGEMLEAVAPFTSEICGRAIVMPNLVPPVTSVAAARAYRERIVAAVPAAHDFTPLMTCYLTDGLDPDEIEAGFAEGVFTAAKLYPAHATTNSAHGVTSIASIAKVLERMQKIGMPLLIHGEVTDAHIDIFDREARFIETVLHPLRQQFPELKVVCEHITTQEAAAYVLEGNQYLAATITPQHLMFNRNHMLVGGIRPHLYCLPILKRNIHQQALRDAVASGHRRFFLGTDTAPHTRDRKETSCGCAGVFNAPSMLSAYATVFEEIGALAHFEAFCSENGPGFYGLPLNEDKVRLIRQPWTVPESIRVGGNGDNLVPFLAGETLNWQVVL.

Histidine 17 and histidine 19 together coordinate Zn(2+). Substrate is bound by residues 19 to 21 (HLR) and asparagine 45. Zn(2+) is bound by residues lysine 103, histidine 140, and histidine 178. Lysine 103 carries the N6-carboxylysine modification. Histidine 140 contacts substrate. Substrate is bound at residue leucine 223. A Zn(2+)-binding site is contributed by aspartate 251. Aspartate 251 is a catalytic residue. Positions 255 and 267 each coordinate substrate.

This sequence belongs to the metallo-dependent hydrolases superfamily. DHOase family. Class II DHOase subfamily. As to quaternary structure, homodimer. Zn(2+) is required as a cofactor.

The enzyme catalyses (S)-dihydroorotate + H2O = N-carbamoyl-L-aspartate + H(+). The protein operates within pyrimidine metabolism; UMP biosynthesis via de novo pathway; (S)-dihydroorotate from bicarbonate: step 3/3. Functionally, catalyzes the reversible cyclization of carbamoyl aspartate to dihydroorotate. This is Dihydroorotase from Erwinia tasmaniensis (strain DSM 17950 / CFBP 7177 / CIP 109463 / NCPPB 4357 / Et1/99).